The sequence spans 405 residues: Elongation factor Tu (405 aa).

The tr-type G domain maps to 10-215 (KPHVNIGTIG…AVDSYIPTPE (206 aa)). A G1 region spans residues 19-26 (GHVDHGKT). 19–26 (GHVDHGKT) is a GTP binding site. Mg(2+) is bound at residue T26. A G2 region spans residues 61 to 65 (GITIN). The tract at residues 82 to 85 (DCPG) is G3. GTP contacts are provided by residues 82–86 (DCPGH) and 137–140 (NKVD). Residues 137–140 (NKVD) are G4. Residues 175–177 (SAL) are G5.

It belongs to the TRAFAC class translation factor GTPase superfamily. Classic translation factor GTPase family. EF-Tu/EF-1A subfamily. As to quaternary structure, monomer.

It localises to the cytoplasm. It catalyses the reaction GTP + H2O = GDP + phosphate + H(+). Functionally, GTP hydrolase that promotes the GTP-dependent binding of aminoacyl-tRNA to the A-site of ribosomes during protein biosynthesis. This chain is Elongation factor Tu, found in Deinococcus radiodurans (strain ATCC 13939 / DSM 20539 / JCM 16871 / CCUG 27074 / LMG 4051 / NBRC 15346 / NCIMB 9279 / VKM B-1422 / R1).